A 313-amino-acid chain; its full sequence is Esterase mpl1 (313 aa).

Catalysis depends on charge relay system residues S174, D259, and H287.

This sequence belongs to the LovG family.

The protein operates within mycotoxin biosynthesis. In terms of biological role, esterase; part of the gene cluster that mediates the biosynthesis of the mycotoxin citrinin, a hepato-nephrotoxic compound to humans due to inhibition of respiration complex III. The pathway begins with the synthesis of a keto-aldehyde intermediate by the citrinin PKS (pksCT) from successive condensations of 4 malonyl-CoA units, presumably with a simple acetyl-CoA starter unit. Release of the keto-aldehyde intermediate is consistent with the presence of the C-terminal reductive release domain. Mp11 collaborates with pksCT by catalyzing the hydrolysis of ACP-bound acyl intermediates to free the ACP from stalled intermediates. Mpl2 then catalyzes the oxidation of the C-12 methyl of the ketone intermediate to an alcohol intermediate which is further oxidized by the oxidoreductase mpl7 to produce a bisaldehyde intermediate. The fourth catalytic step is catalyzed by the mpl4 aldehyde dehydrogenase. The final transformation is the reduction of C-3 by mpl6 to provide the chemically stable citrinin nucleus. This chain is Esterase mpl1, found in Monascus purpureus (Red mold).